The chain runs to 412 residues: Hyaluronidase-3 (412 aa).

Residues 1–22 (MIMHLGLMMVVGLTLCLMHGQA) form the signal peptide. Cystine bridges form between C42–C332, C206–C221, C357–C368, C362–C396, and C398–C407. N69 is a glycosylation site (N-linked (GlcNAc...) asparagine). The active-site Proton donor is E129. An N-linked (GlcNAc...) asparagine glycan is attached at N216. In terms of domain architecture, EGF-like spans 353–408 (AAMACSHQRCHGHGRCARKDPGQMEAFLHLQPDDSLGAWNSFRCHCYSGWAGPTCL).

The protein belongs to the glycosyl hydrolase 56 family. Post-translationally, N-glycosylated. In terms of tissue distribution, expressed in testis, epididymal tissue, epididymal luminal fluid (ELF), acrosome-intact (AI) sperm and caput (CAP), corpus (COR) and caudal (CAU) sperm. Higher expression in sperm than testis (at protein level). Liver, kidney, skin, brain, stomach and testis. Expressed mainly in granulosa cells of the ovaries. Expressed in small and large antral follicles. Not present in theca or stroma cells. Expressed in testis and liver. Expressed in testis and CAP, COR, and CAU epididymis tissue.

The protein resides in the secreted. It localises to the cell membrane. Its subcellular location is the cytoplasmic vesicle. The protein localises to the secretory vesicle. It is found in the acrosome. The protein resides in the endoplasmic reticulum. It localises to the early endosome. It catalyses the reaction Random hydrolysis of (1-&gt;4)-linkages between N-acetyl-beta-D-glucosamine and D-glucuronate residues in hyaluronate.. Facilitates sperm penetration into the layer of cumulus cells surrounding the egg by digesting hyaluronic acid. Involved in induction of the acrosome reaction in the sperm. Involved in follicular atresia, the breakdown of immature ovarian follicles that are not selected to ovulate. Induces ovarian granulosa cell apoptosis, possibly via apoptotic signaling pathway involving CASP8 and CASP3 activation, and poly(ADP-ribose) polymerase (PARP) cleavage. Has no hyaluronidase activity in embryonic fibroblasts in vitro. Has no hyaluronidase activity in granulosa cells in vitro. This is Hyaluronidase-3 (Hyal3) from Mus musculus (Mouse).